The primary structure comprises 213 residues: Putative cytochrome c-type biogenesis protein HI_1454 (213 aa).

The next 6 helical transmembrane spans lie at 15 to 35 (GLASFLSPCIFPIIPIYFGIL), 46 to 66 (FLFILGLSLTFVSLGFSFGFL), 77 to 97 (IIAGVIVIILGIHQLGIFKIG), 118 to 138 (AFVLGLTFSLGWTPCIGPILA), 154 to 174 (ASMMFVYVLGLATPFVLFSFF), and 192 to 212 (FKIGGGILIIVMGILLITNNF).

Belongs to the DsbD family.

The protein resides in the cell membrane. Its function is as follows. Could be involved in cytochrome c synthesis. In Haemophilus influenzae (strain ATCC 51907 / DSM 11121 / KW20 / Rd), this protein is Putative cytochrome c-type biogenesis protein HI_1454.